The primary structure comprises 1182 residues: Myosin IC heavy chain (1182 aa).

The Myosin motor domain maps to 15–698; it reads EGLDDMTLLS…MLFSLEETRE (684 aa). 109–116 provides a ligand contact to ATP; that stretch reads GESGAGKT. An actin-binding region spans residues 571-593; sequence AAELVATLMKSTPHYIRTIKPND. The TH1 domain occupies 774-957; the sequence is RNRFSMISVR…QFHIASGLPA (184 aa). 2 disordered regions span residues 999–1052 and 1064–1103; these read KPAP…PAPG and SKPLPSPTGAPMMKKPAPTAPGGPAPAGAPTPMMKKPAGQ. The segment covering 1013–1042 has biased composition (low complexity); that stretch reads KKPAPTAPGGAPMMKKPAPAPGGAPMMKKP. A compositionally biased stretch (pro residues) spans 1081-1092; sequence PTAPGGPAPAGA. Positions 1123–1182 constitute an SH3 domain; it reads PPPQQYIALYEYDAMQPDELTFKENDVINLIKKVDADWWQGELVRTKQIGMLPSNYVQQI.

The protein belongs to the TRAFAC class myosin-kinesin ATPase superfamily. Myosin family. Myosin I heavy chain is single-headed. Dimer of a heavy and a light chain. Inability to self-assemble into filaments.

Its subcellular location is the cell projection. The protein localises to the lamellipodium. In terms of biological role, myosin is a protein that binds to actin and has ATPase activity that is activated by actin. Involved in the process of phagocytosis and appears to support streaming behavior. The polypeptide is Myosin IC heavy chain (myoC) (Dictyostelium discoideum (Social amoeba)).